A 466-amino-acid polypeptide reads, in one-letter code: MSITSVASVFKGEFAIGSQVTVRGWVRSRRDSKAGISFLAVYDGSCFDPIQGVVPNSLENYNDEILKLTAGCSVVMTGEVVDSPGKGQAFELQVSSVEVAGWVEDPDTYPMAAKRHSIEHLRELAHLRPRTNIIGAVARVRNSLSQAIHRFYHEQGFIWVSTPLITASDAEGAGEMFRVSTLDMENLPRNDEGKVDYSEDFFGKESFLTVSGQLNAETYASALSKVYTFGPTFRAENSNTSRHLAEFWMVEPEVAFADLDDVAGLAEQMLKFCFKAVLEERRDDLEFFAQRVDKTVIDRLESFVSSDFAQVDYTDAVEILKSCGKKFEYPVEWGIDLQSEHERYLAEEHFKAPVVVKNYPKDIKAFYMRLNDDGKTVAAMDVLAPGIGEIIGGAQREERLDVLDARLEEMNLSKEDYWWYRDMRRYGTVPHSGFGLGFERLVSYVTGVSNIRDVIPFPRAPKSASF.

This sequence belongs to the class-II aminoacyl-tRNA synthetase family. As to quaternary structure, homodimer.

It is found in the cytoplasm. The enzyme catalyses tRNA(Asn) + L-asparagine + ATP = L-asparaginyl-tRNA(Asn) + AMP + diphosphate + H(+). In Shewanella sediminis (strain HAW-EB3), this protein is Asparagine--tRNA ligase.